The following is a 387-amino-acid chain: Phosphoglycerate kinase (387 aa).

Substrate-binding positions include 21-23, Arg-36, 59-62, Arg-113, and Arg-146; these read DLN and HLGR. ATP contacts are provided by residues Lys-197, Glu-314, and 340 to 343; that span reads GGDT.

The protein belongs to the phosphoglycerate kinase family. In terms of assembly, monomer.

The protein resides in the cytoplasm. The enzyme catalyses (2R)-3-phosphoglycerate + ATP = (2R)-3-phospho-glyceroyl phosphate + ADP. Its pathway is carbohydrate degradation; glycolysis; pyruvate from D-glyceraldehyde 3-phosphate: step 2/5. This is Phosphoglycerate kinase from Alcanivorax borkumensis (strain ATCC 700651 / DSM 11573 / NCIMB 13689 / SK2).